The chain runs to 91 residues: Small ribosomal subunit protein eS24 (91 aa).

The disordered stretch occupies residues 51-91 (QRRKDAAAHKEAYNAMPEAERRHLNSEKYANRKAEVSYKHR).

It belongs to the eukaryotic ribosomal protein eS24 family.

This Caenorhabditis elegans protein is Small ribosomal subunit protein eS24.